The sequence spans 224 residues: Glutathione S-transferase D7 (224 aa).

In terms of domain architecture, GST N-terminal spans 2 to 83 (PNLDLYNFPM…YLVEKYGKPD (82 aa)). Residues 53 to 55 (HTI) and 67 to 69 (ESR) contribute to the glutathione site. One can recognise a GST C-terminal domain in the interval 90-210 (DPQKRALINQ…LESLQQGKKF (121 aa)).

This sequence belongs to the GST superfamily. Delta family. As to quaternary structure, homodimer.

It carries out the reaction RX + glutathione = an S-substituted glutathione + a halide anion + H(+). Functionally, conjugation of reduced glutathione to a wide number of exogenous and endogenous hydrophobic electrophiles. May be involved in detoxification. The protein is Glutathione S-transferase D7 of Drosophila melanogaster (Fruit fly).